Reading from the N-terminus, the 156-residue chain is Fibroblast growth factor 2 (156 aa).

A propeptide spanning residues M1 to L9 is cleaved from the precursor. N37 lines the heparin pocket. Position 83 is a phosphotyrosine; by TEC (Y83). K96 is covalently cross-linked (Glycyl lysine isopeptide (Lys-Gly) (interchain with G-Cter in SUMO1)). Residues K129–K145 are heparin-binding.

Belongs to the heparin-binding growth factors family. As to quaternary structure, monomer. Homodimer. Interacts with FGFR1, FGFR2, FGFR3 and FGFR4. Affinity between fibroblast growth factors (FGFs) and their receptors is increased by heparan sulfate glycosaminoglycans that function as coreceptors. Interacts with CSPG4, FGFBP1 and TEC. Found in a complex with FGFBP1, FGF1 and FGF2. Interacts with FGFBP3. Interacts with integrin ITGAV:ITGB3; the interaction is required for FGF2 signaling. Interacts with SNORC (via the extracellular domain). Interacts with glypican GPC3. Post-translationally, phosphorylation at Tyr-83 regulates FGF2 unconventional secretion.

Its subcellular location is the secreted. It localises to the nucleus. Its function is as follows. Acts as a ligand for FGFR1, FGFR2, FGFR3 and FGFR4. Also acts as an integrin ligand which is required for FGF2 signaling. Binds to integrin ITGAV:ITGB3. Plays an important role in the regulation of cell survival, cell division, cell differentiation and cell migration. Functions as a potent mitogen in vitro. Can induce angiogenesis. Mediates phosphorylation of ERK1/2 and thereby promotes retinal lens fiber differentiation. This is Fibroblast growth factor 2 (FGF2) from Monodelphis domestica (Gray short-tailed opossum).